The primary structure comprises 359 residues: Cysteine/Cysteine sulfinic acid decarboxylase (359 aa).

In the N-terminal section; belongs to the HFCD (homo-oligomeric flavin containing Cys decarboxylase) superfamily. This sequence in the C-terminal section; belongs to the PPC synthetase family.

The enzyme catalyses L-cysteine + H(+) = cysteamine + CO2. It carries out the reaction 3-sulfino-L-alanine + H(+) = hypotaurine + CO2. Slightly stimulated in the presence of 1 mM Mg(2+). In terms of biological role, catalyzes the decarboxylation of L-cysteine to cysteamine and of 3-sulfino-L-alanine (cysteine sulfinic acid) to hypotaurine. Also catalyzes the decarboxylation of various amino acids such as L-lysine, L-glutamate, L-asparaginate and L-proline. In vitro, shows highest activity with L-cysteine as substrate. The protein is Cysteine/Cysteine sulfinic acid decarboxylase of Unknown prokaryotic organism.